A 420-amino-acid polypeptide reads, in one-letter code: Ribosome biogenesis protein WDR12 homolog (420 aa).

Residues 10 to 92 are ubiquitin-like (UBL) domain; that stretch reads VQVHLKTKQE…EDAIEIEYVE (83 aa). 7 WD repeats span residues 104–142, 143–185, 192–231, 250–288, 290–329, 335–375, and 379–417; these read LHDD…LTIS, GHTA…NAVD, GHER…GVEG, GHRE…IKTE, STNK…GSVV, GHNA…APLY, and GHGD…AEDT.

This sequence belongs to the WD repeat WDR12/YTM1 family.

The protein localises to the nucleus. It localises to the nucleolus. It is found in the nucleoplasm. In terms of biological role, required for maturation of ribosomal RNAs and formation of the large ribosomal subunit. This is Ribosome biogenesis protein WDR12 homolog from Drosophila simulans (Fruit fly).